The following is a 472-amino-acid chain: Serine incorporator 3 (472 aa).

Residues 1–95 are Extracellular-facing; sequence MGAVLGVFSL…KECDVLVRYK (95 aa). Asparagine 34 is a glycosylation site (N-linked (GlcNAc...) asparagine). The chain crosses the membrane as a helical span at residues 96–116; sequence AVYRISFALAVFFFAFSLLML. Residues 117-131 are Cytoplasmic-facing; sequence NVKTSKDPRAAIHNG. Residues 132-152 form a helical membrane-spanning segment; the sequence is FWFFKIAAIVGVMVGSFYIPG. Over 153-158 the chain is Extracellular; the sequence is GHFNTA. Residues 159–179 traverse the membrane as a helical segment; sequence WFVIGMVGAAFFILIQLVLLV. At 180-202 the chain is on the cytoplasmic side; that stretch reads DFAHSWNESWVNRMEEGNPKCWY. Residues 203–223 form a helical membrane-spanning segment; the sequence is AALLSVTSLFYILSIIFAGLL. Topologically, residues 224–238 are extracellular; sequence YTYYTKPDGCTENKF. Residues 239 to 259 form a helical membrane-spanning segment; that stretch reads FISFNLILCVVISVLSIHPKI. The Cytoplasmic portion of the chain corresponds to 260-328; it reads QEHQPRSGLL…APTPAVPLQS (69 aa). A helical membrane pass occupies residues 329–349; sequence GPSLNKENFIGLLVFVLSLSY. Topologically, residues 350 to 405 are extracellular; that stretch reads SSIRNSSNSQVSKLTLSGSDSVILRDTAANGASDEEDGRPRRAVDNEREGVQYNYS. Residue asparagine 354 is glycosylated (N-linked (GlcNAc...) asparagine). The residue at position 370 (serine 370) is a Phosphoserine. Asparagine 403 carries an N-linked (GlcNAc...) asparagine glycan. A helical transmembrane segment spans residues 406–426; sequence MFHLMLCSASLYIMMTLTNWY. Residues 427–445 are Cytoplasmic-facing; sequence SPDANFQSMTSKWPAVWVK. The helical transmembrane segment at 446–466 threads the bilayer; it reads ISSSWVCLLLYVWTLVAPLVL. Residues 467 to 472 are Extracellular-facing; that stretch reads TNRDFS.

It belongs to the TDE1 family. In terms of processing, N-glycosylated.

The protein resides in the cell membrane. It is found in the golgi apparatus membrane. The enzyme catalyses a 1,2-diacyl-sn-glycero-3-phospho-L-serine(in) = a 1,2-diacyl-sn-glycero-3-phospho-L-serine(out). The catalysed reaction is a 1,2-diacyl-sn-glycero-3-phosphocholine(in) = a 1,2-diacyl-sn-glycero-3-phosphocholine(out). It catalyses the reaction a 1,2-diacyl-sn-glycero-3-phosphoethanolamine(in) = a 1,2-diacyl-sn-glycero-3-phosphoethanolamine(out). Its function is as follows. Restriction factor required to restrict infectivity of gammaretroviruses: acts by inhibiting an early step of viral infection. Impairs the penetration of the viral particle into the cytoplasm. Non-ATP-dependent, non-specific lipid transporter for phosphatidylserine, phosphatidylcholine, and phosphatidylethanolamine. Functions as a scramblase that flips lipids in both directions across the membrane. Phospholipid scrambling results in gammaretroviral surface exposure of phosphatidylserine and loss of membrane asymmetry, which leads to loss of infectivity. This Bos taurus (Bovine) protein is Serine incorporator 3 (SERINC3).